Consider the following 304-residue polypeptide: MYQDEIKHEIKTLLGERNGILLAHNYMRDEVQEIADITGDSLGLSIEAAKTDASVIVFCGVHFMAESASILAPDKTVLLPRLDAGCPMADMVTVPELQELKARHPGVPVVTYVNSSAAIKAISDICCTSANAVKVVKSLPESEIIFVPDRNLGRYVARFTDKTFHYWDGYCPTHERLKPDAVIRLKQEFPDALFICHPECNPEVEALADHVCSTTGMYDYCRKNPARRFIIGTEAGILYRLKKENPDKEFILASPALVCPNMKLTSLEDILESLRTMTPVVKVPEEIRIPAKQALDRMLAIPRD.

The iminosuccinate site is built by histidine 24 and serine 41. A [4Fe-4S] cluster-binding site is contributed by cysteine 86. Iminosuccinate-binding positions include 112–114 (YVN) and serine 129. A [4Fe-4S] cluster-binding site is contributed by cysteine 171. Iminosuccinate contacts are provided by residues 197–199 (HPE) and threonine 214. Cysteine 259 is a [4Fe-4S] cluster binding site.

It belongs to the quinolinate synthase family. Type 2 subfamily. The cofactor is [4Fe-4S] cluster.

It is found in the cytoplasm. The catalysed reaction is iminosuccinate + dihydroxyacetone phosphate = quinolinate + phosphate + 2 H2O + H(+). It participates in cofactor biosynthesis; NAD(+) biosynthesis; quinolinate from iminoaspartate: step 1/1. In terms of biological role, catalyzes the condensation of iminoaspartate with dihydroxyacetone phosphate to form quinolinate. This is Quinolinate synthase from Geotalea uraniireducens (strain Rf4) (Geobacter uraniireducens).